Reading from the N-terminus, the 79-residue chain is Conotoxin Vi6.1 (79 aa).

The N-terminal stretch at 1–22 is a signal peptide; the sequence is MKLTCVLIITVLFLTASQLITA. The propeptide occupies 23-47; it reads DYSRDQRQYRAVRLGDEMRNFKGAR. 3 disulfides stabilise this stretch: Cys49-Cys62, Cys56-Cys67, and Cys61-Cys77. 4-hydroxyproline is present on residues Pro60 and Pro63.

In terms of tissue distribution, expressed by the venom duct.

The protein resides in the secreted. Its function is as follows. Ion channel inhibitor that inhibits the increase in intracellular calcium upon depolarization in DRG neurons. In vivo, both intraperitoneal and intracranial injections into mice induce hyperactivity. The chain is Conotoxin Vi6.1 from Conus virgo (Virgin cone).